A 115-amino-acid polypeptide reads, in one-letter code: U3-lycotoxin-Ls1u (115 aa).

Positions 1 to 20 (MKFVLLFGVLLVTLFSYSSA) are cleaved as a signal peptide. A propeptide spanning residues 21 to 44 (EMLDDFDQADEDELLSLIEKEEAR) is cleaved from the precursor. Disulfide bonds link Cys-48-Cys-63, Cys-55-Cys-72, and Cys-62-Cys-87.

This sequence belongs to the neurotoxin 19 (CSTX) family. 01 subfamily. As to expression, expressed by the venom gland.

It is found in the secreted. The chain is U3-lycotoxin-Ls1u from Lycosa singoriensis (Wolf spider).